The chain runs to 993 residues: UPF0182 protein ROP_64500 (993 aa).

The next 7 helical transmembrane spans lie at 18 to 38 (VLLVLALVVAALLLVGPRLIS), 63 to 83 (LLLFLVVGVVVGGIVWLALLL), 114 to 134 (LFGLAIPIAVGLLAGLIAQSS), 174 to 194 (WLFVAVLLAFFASLVTHYIFG), 211 to 231 (VQLAVLAGTFILLKAVAYWFD), 260 to 280 (KLILLAIAVICAGAFFAAIFL), and 288 to 308 (MATALLVLSSILVGAVWPLVV). A disordered region spans residues 904–948 (TGSVATAPSAEEGTPPETGTTPPVEQGAAPPAPTAPATPPSGTDV). Residues 908-926 (ATAPSAEEGTPPETGTTPP) show a composition bias toward low complexity. The segment covering 933–942 (PPAPTAPATP) has biased composition (pro residues).

Belongs to the UPF0182 family.

It localises to the cell membrane. The polypeptide is UPF0182 protein ROP_64500 (Rhodococcus opacus (strain B4)).